We begin with the raw amino-acid sequence, 377 residues long: N5-carboxyaminoimidazole ribonucleotide synthase (377 aa).

Residues Arg93, Lys133, 138–144, 175–178, Glu183, His206, and 257–258 contribute to the ATP site; these read GYDGRGQ, EEFV, and NE. The ATP-grasp domain occupies 97 to 287; sequence KTLLDHAGVR…QFENHLRAVC (191 aa).

Belongs to the PurK/PurT family. Homodimer.

It carries out the reaction 5-amino-1-(5-phospho-beta-D-ribosyl)imidazole + hydrogencarbonate + ATP = 5-carboxyamino-1-(5-phospho-D-ribosyl)imidazole + ADP + phosphate + 2 H(+). It functions in the pathway purine metabolism; IMP biosynthesis via de novo pathway; 5-amino-1-(5-phospho-D-ribosyl)imidazole-4-carboxylate from 5-amino-1-(5-phospho-D-ribosyl)imidazole (N5-CAIR route): step 1/2. Its function is as follows. Catalyzes the ATP-dependent conversion of 5-aminoimidazole ribonucleotide (AIR) and HCO(3)(-) to N5-carboxyaminoimidazole ribonucleotide (N5-CAIR). The chain is N5-carboxyaminoimidazole ribonucleotide synthase from Vibrio vulnificus (strain YJ016).